The following is a 577-amino-acid chain: Arginine--tRNA ligase (577 aa).

Residues Pro122–His132 carry the 'HIGH' region motif.

The protein belongs to the class-I aminoacyl-tRNA synthetase family. In terms of assembly, monomer.

The protein resides in the cytoplasm. The catalysed reaction is tRNA(Arg) + L-arginine + ATP = L-arginyl-tRNA(Arg) + AMP + diphosphate. This Vibrio vulnificus (strain CMCP6) protein is Arginine--tRNA ligase.